The chain runs to 333 residues: Glyceraldehyde-3-phosphate dehydrogenase (333 aa).

NAD(+) is bound by residues 11 to 12, D32, and R77; that span reads RI. Residues 148–150, T179, 208–209, and R231 each bind D-glyceraldehyde 3-phosphate; these read SCT and TG. C149 acts as the Nucleophile in catalysis. An NAD(+)-binding site is contributed by N313.

The protein belongs to the glyceraldehyde-3-phosphate dehydrogenase family. Homotetramer.

The protein localises to the cytoplasm. The catalysed reaction is D-glyceraldehyde 3-phosphate + phosphate + NAD(+) = (2R)-3-phospho-glyceroyl phosphate + NADH + H(+). Its pathway is carbohydrate degradation; glycolysis; pyruvate from D-glyceraldehyde 3-phosphate: step 1/5. In Glossina morsitans morsitans (Savannah tsetse fly), this protein is Glyceraldehyde-3-phosphate dehydrogenase (Gapdh).